Reading from the N-terminus, the 324-residue chain is Beta-ketoacyl-[acyl-carrier-protein] synthase III (324 aa).

Catalysis depends on residues cysteine 113 and histidine 251. The tract at residues 252–256 (QANKR) is ACP-binding. The active site involves asparagine 281.

This sequence belongs to the thiolase-like superfamily. FabH family. As to quaternary structure, homodimer.

The protein resides in the cytoplasm. It carries out the reaction malonyl-[ACP] + acetyl-CoA + H(+) = 3-oxobutanoyl-[ACP] + CO2 + CoA. It functions in the pathway lipid metabolism; fatty acid biosynthesis. Catalyzes the condensation reaction of fatty acid synthesis by the addition to an acyl acceptor of two carbons from malonyl-ACP. Catalyzes the first condensation reaction which initiates fatty acid synthesis and may therefore play a role in governing the total rate of fatty acid production. Possesses both acetoacetyl-ACP synthase and acetyl transacylase activities. Its substrate specificity determines the biosynthesis of branched-chain and/or straight-chain of fatty acids. This is Beta-ketoacyl-[acyl-carrier-protein] synthase III from Bartonella henselae (strain ATCC 49882 / DSM 28221 / CCUG 30454 / Houston 1) (Rochalimaea henselae).